A 238-amino-acid chain; its full sequence is Ribonuclease HII (238 aa).

An RNase H type-2 domain is found at 12–197 (GIVAGVDEAG…VLELLTDDLL (186 aa)). Positions 18, 19, and 107 each coordinate a divalent metal cation.

The protein belongs to the RNase HII family. It depends on Mn(2+) as a cofactor. Mg(2+) is required as a cofactor.

It is found in the cytoplasm. The enzyme catalyses Endonucleolytic cleavage to 5'-phosphomonoester.. In terms of biological role, endonuclease that specifically degrades the RNA of RNA-DNA hybrids. This Thermotoga maritima (strain ATCC 43589 / DSM 3109 / JCM 10099 / NBRC 100826 / MSB8) protein is Ribonuclease HII (rnhB).